The primary structure comprises 1716 residues: DNA-directed RNA polymerase I subunit RPA1 (1716 aa).

Zn(2+)-binding residues include Cys64, Cys67, Cys74, His77, Cys104, and Cys107. A clamp region spans residues 110 to 201 (LTCPRAAIHL…VAHFWKTHMA (92 aa)). Residues Cys205 and Cys208 each coordinate Zn(2+). Positions 327-433 (FTNGQTVNLQ…IRQILEKKEG (107 aa)) are clamp. The interval 410-423 (DSDMDKLMLEKYPG) is rudder. DNA is bound by residues Lys431, Arg436, and Arg443. Residues 475–549 (YPQPVTPWNV…QGAKVVCRHV (75 aa)) form an involved in RRN3 binding to Pol I complex region. Arg559 is a binding site for RNA. The Mg(2+) site is built by Asp595, Asp597, and Asp599. Position 599 (Asp599) interacts with RNA. The interval 812–890 (KPNADVMRQR…NEINKACMPF (79 aa)) is funnel. The segment at 967–1008 (RPPEFFFHCMAGREGLVDTAVKTSRSGYLQRCIIKHLEGLVI) is bridging helix. The segment at 1067–1162 (ADPQKVLRHF…SLSVWRPDIH (96 aa)) is mediates the interaction with TOP2A. Residues 1214 to 1255 (PGEAVGLLAAQSIGEPSTQMTLNTFHFAGRGEMNVTLGIPRL) form a trigger loop region. Arg1256 is a binding site for DNA. Residues 1368–1493 (ASAFRSVNTR…RHSRPQGAEA (126 aa)) form a disordered region. Over residues 1380–1397 (TQKDLDDTEDSGRNRREE) the composition is skewed to basic and acidic residues. Composition is skewed to acidic residues over residues 1398–1419 (ERDE…DADA) and 1429–1451 (EEEV…VQEE). The segment covering 1452–1464 (ENIKGEGAHQTHE) has biased composition (basic and acidic residues). A compositionally biased stretch (acidic residues) spans 1465 to 1477 (PDEEEGSGLEEES).

The protein belongs to the RNA polymerase beta' chain family. As to quaternary structure, component of the RNA polymerase I (Pol I) complex consisting of 13 subunits: a ten-subunit catalytic core composed of POLR1A/RPA1, POLR1B/RPA2, POLR1C/RPAC1, POLR1D/RPAC2, POLR1H/RPA12, POLR2E/RPABC1, POLR2F/RPABC2, POLR2H/RPABC3, POLR2K/RPABC4 and POLR2L/RPABC5; a mobile stalk subunit POLR1F/RPA43 protruding from the core and additional subunits homologous to general transcription factors POLR1E/RPA49 and POLR1G/RPA34. Part of Pol I pre-initiation complex (PIC), in which Pol I core assembles with RRN3 and promoter-bound UTBF and SL1/TIF-IB complex. Interacts (via dock II domain) with TOP2A; this interaction may assist Pol I transcription initiation by releasing supercoils occurring during DNA unwinding. Interacts with CAVIN1; this interaction induces the dissociation of Pol I complex paused at rDNA terminator sequences. Interacts with MYO1C. Interacts with ERBB2. Interacts with DDX11. Interacts with RECQL5. It depends on Mg(2+) as a cofactor. In terms of processing, phosphorylated.

It localises to the nucleus. Its subcellular location is the nucleolus. It is found in the chromosome. The enzyme catalyses RNA(n) + a ribonucleoside 5'-triphosphate = RNA(n+1) + diphosphate. Catalytic core component of RNA polymerase I (Pol I), a DNA-dependent RNA polymerase which synthesizes ribosomal RNA precursors using the four ribonucleoside triphosphates as substrates. Transcribes 47S pre-rRNAs from multicopy rRNA gene clusters, giving rise to 5.8S, 18S and 28S ribosomal RNAs. Pol I-mediated transcription cycle proceeds through transcription initiation, transcription elongation and transcription termination stages. During transcription initiation, Pol I pre-initiation complex (PIC) is recruited by the selectivity factor 1 (SL1/TIF-IB) complex bound to the core promoter that precedes an rDNA repeat unit. The PIC assembly bends the promoter favoring the formation of the transcription bubble and promoter escape. Once the polymerase has escaped from the promoter it enters the elongation phase during which RNA is actively polymerized, based on complementarity with the template DNA strand. Highly processive, assembles in structures referred to as 'Miller trees' where many elongating Pol I complexes queue and transcribe the same rDNA coding regions. At terminator sequences downstream of the rDNA gene, PTRF interacts with Pol I and halts Pol I transcription leading to the release of the RNA transcript and polymerase from the DNA. Forms Pol I active center together with the second largest subunit POLR1B/RPA2. Appends one nucleotide at a time to the 3' end of the nascent RNA, with POLR1A/RPA1 contributing a Mg(2+)-coordinating DxDGD motif, and POLR1B/RPA2 participating in the coordination of a second Mg(2+) ion and providing lysine residues believed to facilitate Watson-Crick base pairing between the incoming nucleotide and the template base. Typically, Mg(2+) ions direct a 5' nucleoside triphosphate to form a phosphodiester bond with the 3' hydroxyl of the preceding nucleotide of the nascent RNA, with the elimination of pyrophosphate. Has proofreading activity: Pauses and backtracks to allow the cleavage of a missincorporated nucleotide via POLR1H/RPA12. High Pol I processivity is associated with decreased transcription fidelity. The polypeptide is DNA-directed RNA polymerase I subunit RPA1 (Rattus norvegicus (Rat)).